The chain runs to 888 residues: Protein translocase subunit SecA (888 aa).

ATP is bound by residues Gln-81, 99 to 103 (GEGKT), and Asp-489.

Belongs to the SecA family.

Its subcellular location is the plastid. The protein resides in the chloroplast stroma. It is found in the chloroplast thylakoid membrane. It carries out the reaction ATP + H2O + cellular proteinSide 1 = ADP + phosphate + cellular proteinSide 2.. Its function is as follows. Has a central role in coupling the hydrolysis of ATP to the transfer of proteins across the thylakoid membrane. The chain is Protein translocase subunit SecA from Trieres chinensis (Marine centric diatom).